The following is a 291-amino-acid chain: Putative ribosomal protein uL16-like, mitochondrial (291 aa).

The transit peptide at Met-1–Leu-27 directs the protein to the mitochondrion. A compositionally biased stretch (basic and acidic residues) spans Val-127–Gln-137. The disordered stretch occupies residues Val-127–Arg-173. The span at Arg-163–Arg-173 shows a compositional bias: basic residues.

Belongs to the universal ribosomal protein uL16 family.

The protein localises to the mitochondrion. In terms of biological role, could be a component of the large subunit of mitochondrial ribosome. In Arabidopsis thaliana (Mouse-ear cress), this protein is Putative ribosomal protein uL16-like, mitochondrial.